Reading from the N-terminus, the 244-residue chain is Tubulin-folding cofactor B (244 aa).

At Met1 the chain carries N-acetylmethionine. Phosphotyrosine is present on Tyr98. Ser110 carries the phosphoserine modification. The region spanning 183–225 (GLTDFKPGYWIGIRYDEPLGKNDGSVNGKRYFECQAKYGAFVK) is the CAP-Gly domain. N6-acetyllysine is present on Lys219.

This sequence belongs to the TBCB family. In terms of assembly, supercomplex made of cofactors A to E. Cofactors A and D function by capturing and stabilizing tubulin in a quasi-native conformation. Cofactor E binds to the cofactor D-tubulin complex; interaction with cofactor C then causes the release of tubulin polypeptides that are committed to the native state. Cofactors B and E can form a heterodimer which binds to alpha-tubulin and enhances their ability to dissociate tubulin heterodimers. Interacts with GAN. Interacts with DCTN1. Post-translationally, ubiquitinated in the presence of GAN which targets it for degradation by the proteasome. Phosphorylation by PAK1 is required for normal function.

Its subcellular location is the cytoplasm. It is found in the cytoskeleton. Binds to alpha-tubulin folding intermediates after their interaction with cytosolic chaperonin in the pathway leading from newly synthesized tubulin to properly folded heterodimer. Involved in regulation of tubulin heterodimer dissociation. May function as a negative regulator of axonal growth. The polypeptide is Tubulin-folding cofactor B (TBCB) (Bos taurus (Bovine)).